Here is a 237-residue protein sequence, read N- to C-terminus: Ribosomal RNA large subunit methyltransferase E (237 aa).

Positions 80, 82, 108, 124, and 148 each coordinate S-adenosyl-L-methionine. Lys188 functions as the Proton acceptor in the catalytic mechanism.

The protein belongs to the class I-like SAM-binding methyltransferase superfamily. RNA methyltransferase RlmE family.

The protein localises to the cytoplasm. The enzyme catalyses uridine(2552) in 23S rRNA + S-adenosyl-L-methionine = 2'-O-methyluridine(2552) in 23S rRNA + S-adenosyl-L-homocysteine + H(+). Its function is as follows. Specifically methylates the uridine in position 2552 of 23S rRNA at the 2'-O position of the ribose in the fully assembled 50S ribosomal subunit. The sequence is that of Ribosomal RNA large subunit methyltransferase E from Jannaschia sp. (strain CCS1).